The chain runs to 2322 residues: MNYRIFLLFCTTTVLWSVVSTQLVLGKPPIFQNTGPVEQKVAVEGEIVRLKCDDAELAEQYEWRVGDASGDLIAASRFAQVTVSRTNDNQKYRCVARNTVGAAISPPSVVRSKYLDDFDASDESAQYDVLAGIGRHFVLRTPRLLSSRNLDISYSWIKDDSNQVTPDATHFVTANGDLVVTSVKRDDFGTYKLMASSDDLKEIVSKEYIVKDNGMAPSLQNTLSIIYFSPERTIVESSMPHDEKFDCVTSFEAKDDVRIRWFLNGQPITGSEVGIKTTMNNRRLIISNPSGFTRGEHKLECRADAAMGRTSDQNSAYLTFISRPVLKDLPNEIHKKVGSSLTLKCGVKKKSSMDIKWYRNGLMMNTQRGKLTIDRIRQEDFGLYQCEAVNEAGADMSSVWVKEGDINNDTMVMGMSEDGRSLEEEISMETPPPRKLKFFDSSKSQEQLFPFTSDIESSQRLTKTPKDLTAASGTDKITLECAAAGSPPPHIVWFLNGNGIQTDSVKYDFSNGDLTIHDIRKSDEGEYTCEISGTDVKASANVQVNGDSLIEYGPADQKSLIGTNVEFSCEVAKEYARKATVEWYLNDALLPVNGNSGLRISRNRKGSLIIRQVGPDNTGEYRCRVTVDGREENASAMLQIIEKPAMPERVRAELHNETMPAKVRVRWNEGFDGNEPIIKHAIEIRTMGPTGLWSDWTTAIDNIPKDDGKPCCWADIEDLRPSSTAEFRVVASNKHGPGKPSLPSSSVTMPQQPPSAAPRNVAASARSPHSVMVQWQQPKEEQDSGDFLGYVVRYRLAGYSSLTWNEKNLTTKDARNTLVDELITWREYEIQVAAYNKRGLGVFSESIEVTTAEGRPTQAPKNVRVKVLNSTAVSLEFTAPEQQRIPGVNLGYKVQFWKGEPEKGELYKQVILDPDRRQLSTVVNELEKFGHYNLTVLCFTTPGDGPKSNILRVVTEEDTPEAVDELSIAEVMYNGAVLTWNPPMKENGIVTKYTIRHWASSSPDVKTKHEVDGSTTNITIDGLQPSTRYGVDVMASTKKGDGPVEETKFESGVPPELPGRPSMLSIGDISATTVQLHFTPGFDGHTAIRQWIVEGKMADSSVFAHIFNVSSPKARSIIVTGLRPFTQYQLRLIAENVKGRGAPSEPSRTFETLQTNPETPSQRLFTEPVSATSISVSWTPLLATHWNGQPKGYLIVYREVDEDNWKEVRTPALRSSEHTVTDLRPFTTYEVNVFSENVFGRSLPTDAVKARTYESVPSGSPRNIVVTAEGSKSAIVKWDPVAELSTNGDVIGYKLRVVPERESLMADETREIDVPGQSTLMTKVSNLRPFTSYYVYMSAYTIVGNGPENSTPLSFETLEDVPAPPESFQCSQISEQDVRMKWLPPGSPNGKITNYVISYWKSHEPRSMAIDAQVAGNLLMFSAMSLSPNTQYTFAIKAKNSKGESEEAVAEVMTSSVRLPVRNAPAPVRDTTSQHLATEITIRWDESLPRKLTEDAESPVRAVQVSYQKTNEDEWLTLEKKFEYSKRRAVIKHLSPNSMFRFRIRFIGDFLESSWSPESEWMRTLPSAPFAQPISLKATPYERNSVQLEWVVPHKSTWNSDAIGYRIHYREYPSNETWQMEEIAVHDPHEDREEKVLAKLSTFRHYIIRMRLFNSEGEGPFSAPVFVYVGYSIPKRNLTNIITEPLSSSSIRVKWDAWPKEDSETVTSFKVRYVPVASVLSSVSSEEEVMIVDTNECILSDLRKFAEYQISVSPYNRAGEGKMSQVREKTLEDKPGPVGVLRFSDVLMDSVKVSWDEPAQPNGMVIGYIVNYKGYRMQEEFKNEDQQRTSRNYFDSHGLAEGVTYFFSVWAETSAGKGELRSANVTIGPSKDGPLPPSKPQITSGQSYVTLSWNDVANSDEIVGHLLQAKRVSVAEETENGYVSQRPRRNEIRGAKSAAQTSASSNSNRPTHPIGEWITLRPTDGKSEKEQVSYRELQPSSFYVFRVFTRNVRGIGRASPETEQLFVPESIPDDPFYTTWWFMALVAMAAFVLIVIIIAILCVTGSSAKYRREKRSRSIDSLQLADGNFASFQLKGTSAANMTRSRELPTRPGTTQSWLSDQSREPPAYGSVLGDGRNNGGVMNMYGLATDVIPPLPNSGPPHASLEAMQKLSALVGRDIRSQNTAYVVSSSARGSDNERNEYMPTRSDLYGTRSEYGRVEYRGHIPSSSGGSQPQGSPQQQQEPYDSFDEEDDVDDDTVIRGDRTMTDGADDIARHYGSTDQYRDTWRKVRDTDMVRAPILTNQQPSSAAGRSSTTDSTSEGPWANIPATPNLTAGFSSFV.

A signal peptide spans 1-26 (MNYRIFLLFCTTTVLWSVVSTQLVLG). Residues 27–2020 (KPPIFQNTGP…IPDDPFYTTW (1994 aa)) are Extracellular-facing. 3 Ig-like C2-type domains span residues 28–105 (PPIF…AAIS), 217–319 (PSLQ…AYLT), and 324–397 (PVLK…ADMS). Intrachain disulfides connect cysteine 52-cysteine 94, cysteine 247-cysteine 301, and cysteine 345-cysteine 386. A glycan (N-linked (GlcNAc...) asparagine) is linked at asparagine 408. 2 Ig-like C2-type domains span residues 450-545 (PFTS…VQVN) and 548-639 (SLIE…AMLQ). Intrachain disulfides connect cysteine 481–cysteine 529 and cysteine 569–cysteine 623. Asparagine 633 and asparagine 656 each carry an N-linked (GlcNAc...) asparagine glycan. Fibronectin type-III domains follow at residues 646–752 (MPER…MPQQ), 757–854 (APRN…TAEG), 859–958 (APKN…TEED), 962–1056 (AVDE…VPPE), 1060–1155 (RPSM…TLQT), 1160–1255 (PSQR…TYES), 1260–1360 (SPRN…TLED), 1364–1458 (PPES…SSVR), 1464–1567 (APAP…TLPS), 1572–1672 (QPIS…VGYS), 1674–1774 (PKRN…LEDK), 1777–1873 (PVGV…SKDG), and 1908–2010 (QAKR…VPES). The segment at 732–762 (SNKHGPGKPSLPSSSVTMPQQPPSAAPRNVA) is disordered. Asparagine 808, asparagine 869, asparagine 933, and asparagine 1017 each carry an N-linked (GlcNAc...) asparagine glycan. The span at 1040–1049 (GDGPVEETKF) shows a compositional bias: basic and acidic residues. The disordered stretch occupies residues 1040–1060 (GDGPVEETKFESGVPPELPGR). N-linked (GlcNAc...) asparagine glycosylation is present at asparagine 1108. A disordered region spans residues 1139-1163 (GRGAPSEPSRTFETLQTNPETPSQR). A compositionally biased stretch (polar residues) spans 1146–1163 (PSRTFETLQTNPETPSQR). 3 N-linked (GlcNAc...) asparagine glycosylation sites follow: asparagine 1615, asparagine 1677, and asparagine 1864. Positions 1916–1965 (EETENGYVSQRPRRNEIRGAKSAAQTSASSNSNRPTHPIGEWITLRPTDG) are disordered. Positions 1935–1947 (AKSAAQTSASSNS) are enriched in low complexity. The chain crosses the membrane as a helical span at residues 2021-2041 (WFMALVAMAAFVLIVIIIAIL). The Cytoplasmic portion of the chain corresponds to 2042-2322 (CVTGSSAKYR…NLTAGFSSFV (281 aa)). 3 disordered regions span residues 2081-2114 (NMTRSRELPTRPGTTQSWLSDQSREPPAYGSVLG), 2167-2254 (YVVS…ADDI), and 2276-2322 (MVRA…SSFV). Residues 2092-2101 (PGTTQSWLSD) are compositionally biased toward polar residues. Positions 2207–2223 (PSSSGGSQPQGSPQQQQ) are enriched in low complexity. Residues 2227-2238 (DSFDEEDDVDDD) show a composition bias toward acidic residues. Polar residues-rich tracts occupy residues 2282–2302 (LTNQQPSSAAGRSSTTDSTSE) and 2310–2322 (ATPNLTAGFSSFV).

This sequence belongs to the sidekick family.

The protein resides in the membrane. Functionally, cell adhesion protein. The polypeptide is Protein sidekick homolog (rig-4) (Caenorhabditis briggsae).